Here is a 106-residue protein sequence, read N- to C-terminus: uncharacterized protein (106 aa).

This sequence belongs to the HesB/IscA family.

This is an uncharacterized protein from Rhodobacter capsulatus (Rhodopseudomonas capsulata).